Consider the following 434-residue polypeptide: Septin-6 (434 aa).

A2 is subject to N-acetylalanine. S27 carries the post-translational modification Phosphoserine. A Septin-type G domain is found at 39–305 (QGFCFNILCV…ELYRRCKLEE (267 aa)). A G1 motif region spans residues 49–56 (GETGLGKS). GTP is bound by residues 49-56 (GETGLGKS), G104, 185-193 (KSDAISKSE), G239, and R254. The tract at residues 101–104 (STVG) is G3 motif. A G4 motif region spans residues 184–187 (AKSD). Residues 321–407 (QETYEAKRNE…QRKAAAELLQ (87 aa)) adopt a coiled-coil conformation. Residue K367 is modified to N6-acetyllysine. Positions 403–434 (AELLQSQGSQAGGSQTLKRDKEKKNNPWLCIE) are disordered. Over residues 407–417 (QSQGSQAGGSQ) the composition is skewed to low complexity. Phosphoserine is present on S416. Position 418 is a phosphothreonine (T418).

This sequence belongs to the TRAFAC class TrmE-Era-EngA-EngB-Septin-like GTPase superfamily. Septin GTPase family. As to quaternary structure, septins polymerize into heterooligomeric protein complexes that form filaments, and associate with cellular membranes, actin filaments and microtubules. GTPase activity is required for filament formation. Filaments are assembled from asymmetrical heterotrimers, composed of SEPTIN2, SEPTIN6 and SEPTIN7 that associate head-to-head to form a hexameric unit. Within the trimer, directly interacts with SEPTIN2 and SEPTIN7. Also interacts with SEPTIN9 and SEPTIN12. Interaction with SEPTIN12 alters filament structure. Component of a septin core octameric complex consisting of SEPTIN12, SEPTIN7, SEPTIN6 and SEPTIN2 or SEPTIN4 in the order 12-7-6-2-2-6-7-12 or 12-7-6-4-4-6-7-12 and located in the sperm annulus. Interacts with SOCS7. Interacts with HNRNPA1. Expressed in the cerebral cortex (at protein level). Associated with synaptic vesicles in various brain regions, including glomeruli of the olfactory bulb (at protein level).

The protein localises to the cytoplasm. It is found in the cytoskeleton. The protein resides in the spindle. It localises to the chromosome. Its subcellular location is the centromere. The protein localises to the kinetochore. It is found in the cleavage furrow. The protein resides in the midbody. It localises to the cell projection. Its subcellular location is the cilium. The protein localises to the flagellum. Filament-forming cytoskeletal GTPase. Required for normal organization of the actin cytoskeleton. Involved in cytokinesis. Forms a filamentous structure with SEPTIN12, SEPTIN6, SEPTIN2 and probably SEPTIN4 at the sperm annulus which is required for the structural integrity and motility of the sperm tail during postmeiotic differentiation. This Mus musculus (Mouse) protein is Septin-6.